The following is a 272-amino-acid chain: Small ribosomal subunit protein uS2 (272 aa).

Residues 244 to 272 are disordered; sequence EDDYEGAEGDLDLDSANEEESLEDNNEEE.

Belongs to the universal ribosomal protein uS2 family.

The polypeptide is Small ribosomal subunit protein uS2 (Trichodesmium erythraeum (strain IMS101)).